We begin with the raw amino-acid sequence, 199 residues long: MRLTLQHINRLKVLLHLAGFLPLLWLILSVDQGWFSADPAKDIQHFTGRMALKLLLATLLVTPLARYGKQPLLIRCRRLLGLWCFFWATLHLVSYALLELGLDHLALLGKELISRPYLTLGIISWLILLALAVTSPQIMMRKLGSQWQKLHNFVYLVAILTPIHYLWSVKTLSPQPILYALAALILLLLRYKKFRQWWR.

Helical transmembrane passes span 13–33 (VLLH…VDQG), 79–99 (LLGL…ALLE), 120–140 (LGII…QIMM), 147–167 (WQKL…HYLW), and 169–189 (VKTL…LLLL).

Belongs to the MsrQ family. In terms of assembly, heterodimer of a catalytic subunit (MsrP) and a heme-binding subunit (MsrQ). It depends on FMN as a cofactor. Heme b is required as a cofactor.

It is found in the cell inner membrane. Its function is as follows. Part of the MsrPQ system that repairs oxidized periplasmic proteins containing methionine sulfoxide residues (Met-O), using respiratory chain electrons. Thus protects these proteins from oxidative-stress damage caused by reactive species of oxygen and chlorine generated by the host defense mechanisms. MsrPQ is essential for the maintenance of envelope integrity under bleach stress, rescuing a wide series of structurally unrelated periplasmic proteins from methionine oxidation. MsrQ provides electrons for reduction to the reductase catalytic subunit MsrP, using the quinone pool of the respiratory chain. This Pectobacterium atrosepticum (strain SCRI 1043 / ATCC BAA-672) (Erwinia carotovora subsp. atroseptica) protein is Protein-methionine-sulfoxide reductase heme-binding subunit MsrQ.